The sequence spans 586 residues: A-type ATP synthase subunit A (586 aa).

232-239 (GPFGSGKT) contacts ATP.

It belongs to the ATPase alpha/beta chains family. Has multiple subunits with at least A(3), B(3), C, D, E, F, H, I and proteolipid K(x).

The protein resides in the cell membrane. The enzyme catalyses ATP + H2O + 4 H(+)(in) = ADP + phosphate + 5 H(+)(out). Its function is as follows. Component of the A-type ATP synthase that produces ATP from ADP in the presence of a proton gradient across the membrane. The A chain is the catalytic subunit. This Methanococcus vannielii (strain ATCC 35089 / DSM 1224 / JCM 13029 / OCM 148 / SB) protein is A-type ATP synthase subunit A.